Consider the following 91-residue polypeptide: Transcriptional repressor FrmR (91 aa).

It belongs to the FrmR/RcnR family. Homotetramer.

Its subcellular location is the cytoplasm. Formaldehyde sensor. In the absence of formaldehyde, mediates repression of the frmRAB operon. Acts by binding directly to the frmRAB promoter region. In the presence of formaldehyde, it dissociates from the frmRAB promoter region and allows expression of the formaldehyde detoxification system encoded by frmA and frmB. In Escherichia coli (strain UTI89 / UPEC), this protein is Transcriptional repressor FrmR.